Reading from the N-terminus, the 507-residue chain is MASYSVTVSVAGTSINKYPAGSAGFDLAMADSYDPGKQHARRVAAYLPKQQGLIYLPGQQTVLSEDSDQARPFKQRRYFFYVTGVVEPDCHVTYDIAEDKLTLYVPDFDFKRTIWTGPTLGKDEASQRYDVDRVEYFSALEGDVLRWSQANPSLPIYILHPDQRPVTPLTVAYLYESKSLKHAMDACRVIKDEHEIQLIQRANRVSGAAHRSILANLHHFKNEAQIAGLFIDVCLSLRSKGTAYQTIAGSGSNGATLHYTRNNEPLAGRQMVVLDAGAEWSCYASDVTRSFPIPSSVSGGRDWPSREAEQIYAIVQRMQEECISRVKEGTLFFSIHQHAHAIALEELLKLGILRIPQGSTKADLIKAEVTALFFPHGLGHHLGLEVHDVSPDSGTIPVELAIEREKGLMSVTEHRPPCTLSAPPLASGMVITVEPGLYFNRLAIDQARAERDEPNSKGRFVNFDVVERYVDVGGVRIEDDVLVTKDGNKNLTDAPKGKEMLDLIYGR.

Mn(2+) is bound by residues Asp-275, Asp-286, Glu-434, and Glu-478.

This sequence belongs to the peptidase M24B family. Mn(2+) serves as cofactor.

The catalysed reaction is Release of any N-terminal amino acid, including proline, that is linked to proline, even from a dipeptide or tripeptide.. Catalyzes the removal of a penultimate prolyl residue from the N-termini of peptides. In Arthroderma benhamiae (strain ATCC MYA-4681 / CBS 112371) (Trichophyton mentagrophytes), this protein is Probable Xaa-Pro aminopeptidase ARB_01886.